We begin with the raw amino-acid sequence, 139 residues long: MTERTFSIIKPDATRRNLTGKINAVIEEAGLRIVAQRRVKLTDAQAKKFYEVHAERPFYGELVAQMTAEPVVVQVLEGDNAVLKYREVMGATNPDNADEGTIRKLFALSIGENSVHGSDSLENAAIEIAQFFKDEDIVG.

Residues lysine 10, phenylalanine 58, arginine 86, threonine 92, arginine 103, and asparagine 113 each coordinate ATP. The active-site Pros-phosphohistidine intermediate is histidine 116.

Belongs to the NDK family. As to quaternary structure, homotetramer. Mg(2+) is required as a cofactor.

The protein localises to the cytoplasm. The catalysed reaction is a 2'-deoxyribonucleoside 5'-diphosphate + ATP = a 2'-deoxyribonucleoside 5'-triphosphate + ADP. It carries out the reaction a ribonucleoside 5'-diphosphate + ATP = a ribonucleoside 5'-triphosphate + ADP. In terms of biological role, major role in the synthesis of nucleoside triphosphates other than ATP. The ATP gamma phosphate is transferred to the NDP beta phosphate via a ping-pong mechanism, using a phosphorylated active-site intermediate. The protein is Nucleoside diphosphate kinase of Caulobacter sp. (strain K31).